We begin with the raw amino-acid sequence, 343 residues long: Aspartate carbamoyltransferase catalytic subunit (343 aa).

Residues arginine 91 and threonine 92 each contribute to the carbamoyl phosphate site. Lysine 119 lines the L-aspartate pocket. Carbamoyl phosphate is bound by residues arginine 141, histidine 171, and glutamine 174. Residues arginine 204 and arginine 259 each contribute to the L-aspartate site. Glycine 300 and proline 301 together coordinate carbamoyl phosphate.

It belongs to the aspartate/ornithine carbamoyltransferase superfamily. ATCase family. Heterododecamer (2C3:3R2) of six catalytic PyrB chains organized as two trimers (C3), and six regulatory PyrI chains organized as three dimers (R2).

The catalysed reaction is carbamoyl phosphate + L-aspartate = N-carbamoyl-L-aspartate + phosphate + H(+). It functions in the pathway pyrimidine metabolism; UMP biosynthesis via de novo pathway; (S)-dihydroorotate from bicarbonate: step 2/3. Functionally, catalyzes the condensation of carbamoyl phosphate and aspartate to form carbamoyl aspartate and inorganic phosphate, the committed step in the de novo pyrimidine nucleotide biosynthesis pathway. This Burkholderia ambifaria (strain MC40-6) protein is Aspartate carbamoyltransferase catalytic subunit.